We begin with the raw amino-acid sequence, 476 residues long: tRNA-2-methylthio-N(6)-dimethylallyladenosine synthase (476 aa).

One can recognise an MTTase N-terminal domain in the interval Lys5–Gly122. [4Fe-4S] cluster is bound by residues Cys14, Cys51, Cys85, Cys159, Cys163, and Cys166. The 233-residue stretch at Arg145–Ser377 folds into the Radical SAM core domain. The 64-residue stretch at Arg380–Arg443 folds into the TRAM domain.

The protein belongs to the methylthiotransferase family. MiaB subfamily. Monomer. [4Fe-4S] cluster is required as a cofactor.

The protein resides in the cytoplasm. The catalysed reaction is N(6)-dimethylallyladenosine(37) in tRNA + (sulfur carrier)-SH + AH2 + 2 S-adenosyl-L-methionine = 2-methylsulfanyl-N(6)-dimethylallyladenosine(37) in tRNA + (sulfur carrier)-H + 5'-deoxyadenosine + L-methionine + A + S-adenosyl-L-homocysteine + 2 H(+). In terms of biological role, catalyzes the methylthiolation of N6-(dimethylallyl)adenosine (i(6)A), leading to the formation of 2-methylthio-N6-(dimethylallyl)adenosine (ms(2)i(6)A) at position 37 in tRNAs that read codons beginning with uridine. The protein is tRNA-2-methylthio-N(6)-dimethylallyladenosine synthase of Photorhabdus laumondii subsp. laumondii (strain DSM 15139 / CIP 105565 / TT01) (Photorhabdus luminescens subsp. laumondii).